The primary structure comprises 102 residues: NADH-quinone oxidoreductase subunit K (102 aa).

3 consecutive transmembrane segments (helical) span residues L6–V26, I30–V50, and V62–L82.

The protein belongs to the complex I subunit 4L family. In terms of assembly, NDH-1 is composed of 13 different subunits. Subunits NuoA, H, J, K, L, M, N constitute the membrane sector of the complex.

It is found in the cell inner membrane. It carries out the reaction a quinone + NADH + 5 H(+)(in) = a quinol + NAD(+) + 4 H(+)(out). In terms of biological role, NDH-1 shuttles electrons from NADH, via FMN and iron-sulfur (Fe-S) centers, to quinones in the respiratory chain. The immediate electron acceptor for the enzyme in this species is believed to be ubiquinone. Couples the redox reaction to proton translocation (for every two electrons transferred, four hydrogen ions are translocated across the cytoplasmic membrane), and thus conserves the redox energy in a proton gradient. The polypeptide is NADH-quinone oxidoreductase subunit K (Pseudomonas putida (strain ATCC 700007 / DSM 6899 / JCM 31910 / BCRC 17059 / LMG 24140 / F1)).